We begin with the raw amino-acid sequence, 4303 residues long: MPPAAPARLALALGLGLWLGALAGGPGRGCGPCEPPCLCGPAPGAACRVNCSGRGLRTLGPALRIPADATALDVSHNLLRALDVGLLANLSALAELDISNNKISTLEEGIFANLFNLSEINLSGNPFECDCGLAWLPRWAEEQQVRVVQPEAATCAGPGSLAGQPLLGIPLLDSGCGEEYVACLPDNSSGTVAAVSFSAAHEGLLQPEACSAFCFSTGQGLAALSEQGWCLCGAAQPSSASFACLSLCSGPPPPPAPTCRGPTLLQHVFPASPGATLVGPHGPLASGQLAAFHIAAPLPVTATRWDFGDGSAEVDAAGPAASHRYVLPGRYHVTAVLALGAGSALLGTDVQVEAAPAALELVCPSSVQSDESLDLSIQNRGGSGLEAAYSIVALGEEPARAVHPLCPSDTEIFPGNGHCYRLVVEKAAWLQAQEQCQAWAGAALAMVDSPAVQRFLVSRVTRSLDVWIGFSTVQGVEVGPAPQGEAFSLESCQNWLPGEPHPATAEHCVRLGPTGWCNTDLCSAPHSYVCELQPGGPVQDAENLLVGAPSGDLQGPLTPLAQQDGLSAPHEPVEVMVFPGLRLSREAFLTTAEFGTQELRRPAQLRLQVYRLLSTAGTPENGSEPESRSPDNRTQLAPACMPGGRWCPGANICLPLDASCHPQACANGCTSGPGLPGAPYALWREFLFSVPAGPPAQYSVTLHGQDVLMLPGDLVGLQHDAGPGALLHCSPAPGHPGPRAPYLSANASSWLPHLPAQLEGTWACPACALRLLAATEQLTVLLGLRPNPGLRLPGRYEVRAEVGNGVSRHNLSCSFDVVSPVAGLRVIYPAPRDGRLYVPTNGSALVLQVDSGANATATARWPGGSVSARFENVCPALVATFVPGCPWETNDTLFSVVALPWLSEGEHVVDVVVENSASRANLSLRVTAEEPICGLRATPSPEARVLQGVLVRYSPVVEAGSDMVFRWTINDKQSLTFQNVVFNVIYQSAAVFKLSLTASNHVSNVTVNYNVTVERMNRMQGLQVSTVPAVLSPNATLALTAGVLVDSAVEVAFLWTFGDGEQALHQFQPPYNESFPVPDPSVAQVLVEHNVMHTYAAPGEYLLTVLASNAFENLTQQVPVSVRASLPSVAVGVSDGVLVAGRPVTFYPHPLPSPGGVLYTWDFGDGSPVLTQSQPAANHTYASRGTYHVRLEVNNTVSGAAAQADVRVFEELRGLSVDMSLAVEQGAPVVVSAAVQTGDNITWTFDMGDGTVLSGPEATVEHVYLRAQNCTVTVGAASPAGHLARSLHVLVFVLEVLRVEPAACIPTQPDARLTAYVTGNPAHYLFDWTFGDGSSNTTVRGCPTVTHNFTRSGTFPLALVLSSRVNRAHYFTSICVEPEVGNVTLQPERQFVQLGDEAWLVACAWPPFPYRYTWDFGTEEAAPTRARGPEVTFIYRDPGSYLVTVTASNNISAANDSALVEVQEPVLVTSIKVNGSLGLELQQPYLFSAVGRGRPASYLWDLGDGGWLEGPEVTHAYNSTGDFTVRVAGWNEVSRSEAWLNVTVKRRVRGLVVNASRTVVPLNGSVSFSTSLEAGSDVRYSWVLCDRCTPIPGGPTISYTFRSVGTFNIIVTAENEVGSAQDSIFVYVLQLIEGLQVVGGGRYFPTNHTVQLQAVVRDGTNVSYSWTAWRDRGPALAGSGKGFSLTVLEAGTYHVQLRATNMLGSAWADCTMDFVEPVGWLMVAASPNPAAVNTSVTLSAELAGGSGVVYTWSLEEGLSWETSEPFTTHSFPTPGLHLVTMTAGNPLGSANATVEVDVQVPVSGLSIRASEPGGSFVAAGSSVPFWGQLATGTNVSWCWAVPGGSSKRGPHVTMVFPDAGTFSIRLNASNAVSWVSATYNLTAEEPIVGLVLWASSKVVAPGQLVHFQILLAAGSAVTFRLQVGGANPEVLPGPRFSHSFPRVGDHVVSVRGKNHVSWAQAQVRIVVLEAVSGLQVPNCCEPGIATGTERNFTARVQRGSRVAYAWYFSLQKVQGDSLVILSGRDVTYTPVAAGLLEIQVRAFNALGSENRTLVLEVQDAVQYVALQSGPCFTNRSAQFEAATSPSPRRVAYHWDFGDGSPGQDTDEPRAEHSYLRPGDYRVQVNASNLVSFFVAQATVTVQVLACREPEVDVVLPLQVLMRRSQRNYLEAHVDLRDCVTYQTEYRWEVYRTASCQRPGRPARVALPGVDVSRPRLVLPRLALPVGHYCFVFVVSFGDTPLTQSIQANVTVAPERLVPIIEGGSYRVWSDTRDLVLDGSESYDPNLEDGDQTPLSFHWACVASTQREAGGCALNFGPRGSSTVTIPRERLAAGVEYTFSLTVWKAGRKEEATNQTVLIRSGRVPIVSLECVSCKAQAVYEVSRSSYVYLEGRCLNCSSGSKRGRWAARTFSNKTLVLDETTTSTGSAGMRLVLRRGVLRDGEGYTFTLTVLGRSGEEEGCASIRLSPNRPPLGGSCRLFPLGAVHALTTKVHFECTGWHDAEDAGAPLVYALLLRRCRQGHCEEFCVYKGSLSSYGAVLPPGFRPHFEVGLAVVVQDQLGAAVVALNRSLAITLPEPNGSATGLTVWLHGLTASVLPGLLRQADPQHVIEYSLALVTVLNEYERALDVAAEPKHERQHRAQIRKNITETLVSLRVHTVDDIQQIAAALAQCMGPSRELVCRSCLKQTLHKLEAMMLILQAETTAGTVTPTAIGDSILNITGDLIHLASSDVRAPQPSELGAESPSRMVASQAYNLTSALMRILMRSRVLNEEPLTLAGEEIVAQGKRSDPRSLLCYGGAPGPGCHFSIPEAFSGALANLSDVVQLIFLVDSNPFPFGYISNYTVSTKVASMAFQTQAGAQIPIERLASERAITVKVPNNSDWAARGHRSSANSANSVVVQPQASVGAVVTLDSSNPAAGLHLQLNYTLLDGHYLSEEPEPYLAVYLHSEPRPNEHNCSASRRIRPESLQGADHRPYTFFISPGSRDPAGSYHLNLSSHFRWSALQVSVGLYTSLCQYFSEEDMVWRTEGLLPLEETSPRQAVCLTRHLTAFGASLFVPPSHVRFVFPEPTADVNYIVMLTCAVCLVTYMVMAAILHKLDQLDASRGRAIPFCGQRGRFKYEILVKTGWGRGSGTTAHVGIMLYGVDSRSGHRHLDGDRAFHRNSLDIFRIATPHSLGSVWKIRVWHDNKGLSPAWFLQHVIVRDLQTARSAFFLVNDWLSVETEANGGLVEKEVLAASDAALLRFRRLLVAELQRGFFDKHIWLSIWDRPPRSRFTRIQRATCCVLLICLFLGANAVWYGAVGDSAYSTGHVSRLSPLSVDTVAVGLVSSVVVYPVYLAILFLFRMSRSKVAGSPSPTPAGQQVLDIDSCLDSSVLDSSFLTFSGLHAEQAFVGQMKSDLFLDDSKSLVCWPSGEGTLSWPDLLSDPSIVGSNLRQLARGQAGHGLGPEEDGFSLASPYSPAKSFSASDEDLIQQVLAEGVSSPAPTQDTHMETDLLSSLSSTPGEKTETLALQRLGELGPPSPGLNWEQPQAARLSRTGLVEGLRKRLLPAWCASLAHGLSLLLVAVAVAVSGWVGASFPPGVSVAWLLSSSASFLASFLGWEPLKVLLEALYFSLVAKRLHPDEDDTLVESPAVTPVSARVPRVRPPHGFALFLAKEEARKVKRLHGMLRSLLVYMLFLLVTLLASYGDASCHGHAYRLQSAIKQELHSRAFLAITRSEELWPWMAHVLLPYVHGNQSSPELGPPRLRQVRLQEALYPDPPGPRVHTCSAAGGFSTSDYDVGWESPHNGSGTWAYSAPDLLGAWSWGSCAVYDSGGYVQELGLSLEESRDRLRFLQLHNWLDNRSRAVFLELTRYSPAVGLHAAVTLRLEFPAAGRALAALSVRPFALRRLSAGLSLPLLTSVCLLLFAVHFAVAEARTWHREGRWRVLRLGAWARWLLVALTAATALVRLAQLGAADRQWTRFVRGRPRRFTSFDQVAQLSSAARGLAASLLFLLLVKAAQQLRFVRQWSVFGKTLCRALPELLGVTLGLVVLGVAYAQLAILLVSSCVDSLWSVAQALLVLCPGTGLSTLCPAESWHLSPLLCVGLWALRLWGALRLGAVILRWRYHALRGELYRPAWEPQDYEMVELFLRRLRLWMGLSKVKEFRHKVRFEGMEPLPSRSSRGSKVSPDVPPPSAGSDASHPSTSSSQLDGLSVSLGRLGTRCEPEPSRLQAVFEALLTQFDRLNQATEDVYQLEQQLHSLQGRRSSRAPAGSSRGPSPGLRPALPSRLARASRGVDLATGPSRTPLRAKNKVHPSST.

Residues 1–23 (MPPAAPARLALALGLGLWLGALA) form the signal peptide. The LRRNT domain occupies 24–67 (GGPGRGCGPCEPPCLCGPAPGAACRVNCSGRGLRTLGPALRIPA). At 24–3074 (GGPGRGCGPC…VFPEPTADVN (3051 aa)) the chain is on the extracellular side. N-linked (GlcNAc...) asparagine glycans are attached at residues Asn50 and Asn89. 2 LRR repeats span residues 68 to 91 (DATA…ANLS) and 92 to 113 (ALAE…IFAN). Asn116 and Asn121 each carry an N-linked (GlcNAc...) asparagine glycan. An LRRCT domain is found at 125 to 178 (NPFECDCGLAWLPRWAEEQQVRVVQPEAATCAGPGSLAGQPLLGIPLLDSGCGE). Residues 177 to 271 (GEEYVACLPD…PTLLQHVFPA (95 aa)) form the WSC domain. Asn187 carries N-linked (GlcNAc...) asparagine glycosylation. Residues 272-359 (SPGATLVGPH…VQVEAAPAAL (88 aa)) form the PKD 1 domain. The C-type lectin domain maps to 415 to 531 (GNGHCYRLVV…CSAPHSYVCE (117 aa)). 2 cysteine pairs are disulfide-bonded: Cys436-Cys530 and Cys508-Cys522. Residues 616–635 (AGTPENGSEPESRSPDNRTQ) form a disordered region. 2 N-linked (GlcNAc...) asparagine glycosylation sites follow: Asn621 and Asn632. One can recognise an LDL-receptor class A; atypical domain in the interval 638–671 (PACMPGGRWCPGANICLPLDASCHPQACANGCTS). Disulfide bonds link Cys640–Cys653, Cys647–Cys665, and Cys660–Cys669. Residues 743-817 (LSANASSWLP…RHNLSCSFDV (75 aa)) enclose the PKD 2 domain. 32 N-linked (GlcNAc...) asparagine glycosylation sites follow: Asn746, Asn810, Asn841, Asn854, Asn890, Asn921, Asn1004, Asn1010, Asn1034, Asn1072, Asn1113, Asn1178, Asn1194, Asn1240, Asn1269, Asn1336, Asn1348, Asn1382, Asn1450, Asn1455, Asn1474, Asn1518, Asn1541, Asn1554, Asn1563, Asn1647, Asn1661, Asn1733, Asn1791, Asn1834, Asn1867, and Asn1880. PKD domains lie at 855–928 (ATAT…RVTA), 935–1020 (LRAT…NRMQ), 1023–1129 (QVST…LPSV), 1127–1215 (PSVA…LRGL), 1213–1298 (RGLS…EVLR), 1294–1383 (LEVL…VGNV), 1382–1469 (NVTL…VLVT), 1468–1551 (VTSI…VRGL), 1550–1635 (GLVV…IEGL), 1634–1721 (GLQV…VGWL), 1719–1805 (GWLM…VSGL), 1807–1890 (IRAS…IVGL), 1889–1974 (GLVL…VSGL), 1977–2057 (PNCC…VLEV), and 2060–2148 (AVQY…ACRE). Residues Asn1991, Asn2050, Asn2074, Asn2125, Asn2248, Asn2353, Asn2395, Asn2412, Asn2567, Asn2578, Asn2645, Asn2718, Asn2754, Asn2841, Asn2878, Asn2925, Asn2956, and Asn2994 are each glycosylated (N-linked (GlcNAc...) asparagine). In terms of domain architecture, REJ spans 2146 to 2833 (CREPEVDVVL…QLIFLVDSNP (688 aa)). Residues 2862-3063 (PIERLASERA…SLFVPPSHVR (202 aa)) enclose the GAIN-B domain. An intrachain disulfide couples Cys3015 to Cys3043. Positions 3015 to 3063 (CQYFSEEDMVWRTEGLLPLEETSPRQAVCLTRHLTAFGASLFVPPSHVR) are GPS. The chain crosses the membrane as a helical span at residues 3075 to 3095 (YIVMLTCAVCLVTYMVMAAIL). Over 3096 to 3277 (HKLDQLDASR…DRPPRSRFTR (182 aa)) the chain is Cytoplasmic. The region spanning 3118–3233 (FKYEILVKTG…EANGGLVEKE (116 aa)) is the PLAT domain. Residues 3278 to 3298 (IQRATCCVLLICLFLGANAVW) traverse the membrane as a helical segment. The Extracellular portion of the chain corresponds to 3299–3323 (YGAVGDSAYSTGHVSRLSPLSVDTV). The helical transmembrane segment at 3324–3344 (AVGLVSSVVVYPVYLAILFLF) threads the bilayer. Over 3345–3559 (RMSRSKVAGS…LPAWCASLAH (215 aa)) the chain is Cytoplasmic. The chain crosses the membrane as a helical span at residues 3560-3580 (GLSLLLVAVAVAVSGWVGASF). Topologically, residues 3581–3582 (PP) are extracellular. The helical transmembrane segment at 3583-3603 (GVSVAWLLSSSASFLASFLGW) threads the bilayer. The Cytoplasmic segment spans residues 3604–3665 (EPLKVLLEAL…LAKEEARKVK (62 aa)). A helical membrane pass occupies residues 3666-3686 (RLHGMLRSLLVYMLFLLVTLL). At 3687-3901 (ASYGDASCHG…RLSAGLSLPL (215 aa)) the chain is on the extracellular side. Asn3738, Asn3790, and Asn3845 each carry an N-linked (GlcNAc...) asparagine glycan. Residues 3902–3922 (LTSVCLLLFAVHFAVAEARTW) traverse the membrane as a helical segment. The Cytoplasmic segment spans residues 3923–3935 (HREGRWRVLRLGA). The helical transmembrane segment at 3936 to 3956 (WARWLLVALTAATALVRLAQL) threads the bilayer. Residues 3957 to 3984 (GAADRQWTRFVRGRPRRFTSFDQVAQLS) are Extracellular-facing. A helical transmembrane segment spans residues 3985-4005 (SAARGLAASLLFLLLVKAAQQ). At 4006 to 4027 (LRFVRQWSVFGKTLCRALPELL) the chain is on the cytoplasmic side. A helical transmembrane segment spans residues 4028-4048 (GVTLGLVVLGVAYAQLAILLV). Residues 4049-4090 (SSCVDSLWSVAQALLVLCPGTGLSTLCPAESWHLSPLLCVGL) are Extracellular-facing. Residues 4091-4110 (WALRLWGALRLGAVILRWRY) form a helical membrane-spanning segment. Residues 4111-4303 (HALRGELYRP…AKNKVHPSST (193 aa)) are Cytoplasmic-facing. 2 disordered regions span residues 4160-4196 (PLPS…QLDG) and 4243-4303 (LHSL…PSST). Ser4166 carries the post-translational modification Phosphoserine; by PRKX; in vitro. Residues 4185–4195 (SHPSTSSSQLD) are compositionally biased toward polar residues. Residues 4220 to 4251 (EALLTQFDRLNQATEDVYQLEQQLHSLQGRRS) are a coiled coil. The span at 4253 to 4269 (RAPAGSSRGPSPGLRPA) shows a compositional bias: low complexity. The segment covering 4292–4303 (LRAKNKVHPSST) has biased composition (basic residues).

It belongs to the polycystin family. In terms of assembly, component of the heterotetrameric polycystin channel complex with PKD2; the tetramer contains one PKD1 chain and three PKD2 chains. Interacts with PKD2; the interaction is required for ciliary localization. Interacts with PKD2L1. Interacts with PRKX; involved in differentiation and controlled morphogenesis of the kidney. Interacts (via extracellular domain) with WNT3A, WNT4, WNT5A and WNT9B. Interacts with DVL1 and DVL2. Interacts with NPHP1 (via SH3 domain). Interacts with BBS1, BBS4, BBS5 and TTC8. Interacts with RGS7. Interacts (via the PKD repeats in the N-terminal extracellular region) with EPCIP; the interaction is not dependent on N-glycosylation of either protein. N-glycosylated. In terms of processing, after synthesis, undergoes cleavage between Leu-3048 and Thr-3049 in the GPS region of the GAIN-B domain. Cleavage at the GPS region occurs through a cis-autoproteolytic mechanism involving an ester-intermediate via N-O acyl rearrangement. This process takes place in the early secretory pathway, depends on initial N-glycosylation, and requires the REJ domain. There is evidence that cleavage at GPS region is incomplete. Uncleaved and cleaved products may have different functions in vivo.

It localises to the cell membrane. The protein localises to the cell projection. The protein resides in the cilium. It is found in the endoplasmic reticulum. Its subcellular location is the golgi apparatus. It localises to the vesicle. The protein localises to the secreted. The protein resides in the extracellular exosome. Component of a heteromeric calcium-permeable ion channel formed by PKD1 and PKD2 that is activated by interaction between PKD1 and a Wnt family member, such as WNT3A and WNT9B. Both PKD1 and PKD2 are required for channel activity. Involved in renal tubulogenesis. Involved in fluid-flow mechanosensation by the primary cilium in renal epithelium. Acts as a regulator of cilium length, together with PKD2. The dynamic control of cilium length is essential in the regulation of mechanotransductive signaling. The cilium length response creates a negative feedback loop whereby fluid shear-mediated deflection of the primary cilium, which decreases intracellular cAMP, leads to cilium shortening and thus decreases flow-induced signaling. May be an ion-channel regulator. Involved in adhesive protein-protein and protein-carbohydrate interactions. Likely to be involved with polycystin-1-interacting protein 1 in the detection, sequestration and exocytosis of senescent mitochondria. This Homo sapiens (Human) protein is Polycystin-1.